A 422-amino-acid chain; its full sequence is 2-(3-amino-3-carboxypropyl)histidine synthase subunit 1 (422 aa).

Cys128, Cys234, and Cys363 together coordinate [4Fe-4S] cluster.

Belongs to the DPH1/DPH2 family. DPH1 subfamily. As to quaternary structure, component of the 2-(3-amino-3-carboxypropyl)histidine synthase complex composed of DPH1, DPH2, DPH3 and a NADH-dependent reductase, predominantly CBR1. [4Fe-4S] cluster serves as cofactor.

Its subcellular location is the cytoplasm. It catalyses the reaction L-histidyl-[translation elongation factor 2] + S-adenosyl-L-methionine = 2-[(3S)-amino-3-carboxypropyl]-L-histidyl-[translation elongation factor 2] + S-methyl-5'-thioadenosine + H(+). The protein operates within protein modification; peptidyl-diphthamide biosynthesis. Functionally, catalyzes the first step of diphthamide biosynthesis, a post-translational modification of histidine which occurs in elongation factor 2. DPH1 and DPH2 transfer a 3-amino-3-carboxypropyl (ACP) group from S-adenosyl-L-methionine (SAM) to a histidine residue, the reaction is assisted by a reduction system comprising DPH3 and a NADH-dependent reductase, predominantly CBR1. This is 2-(3-amino-3-carboxypropyl)histidine synthase subunit 1 (DPH1) from Kluyveromyces lactis (strain ATCC 8585 / CBS 2359 / DSM 70799 / NBRC 1267 / NRRL Y-1140 / WM37) (Yeast).